Consider the following 469-residue polypeptide: Adenosylhomocysteinase (469 aa).

Positions 63, 139, and 164 each coordinate substrate. 165 to 167 (TTT) is an NAD(+) binding site. Lys-194 and Asp-198 together coordinate substrate. NAD(+)-binding positions include Asn-199, 228–233 (GYGDVG), Glu-251, Asn-300, 321–323 (IGH), and Asn-375.

This sequence belongs to the adenosylhomocysteinase family. NAD(+) is required as a cofactor.

The protein localises to the cytoplasm. The enzyme catalyses S-adenosyl-L-homocysteine + H2O = L-homocysteine + adenosine. The protein operates within amino-acid biosynthesis; L-homocysteine biosynthesis; L-homocysteine from S-adenosyl-L-homocysteine: step 1/1. In terms of biological role, may play a key role in the regulation of the intracellular concentration of adenosylhomocysteine. The chain is Adenosylhomocysteinase from Pseudomonas aeruginosa (strain LESB58).